Reading from the N-terminus, the 201-residue chain is dITP/XTP pyrophosphatase (201 aa).

8–13 (SNNPGK) is a binding site for substrate. Mg(2+) is bound by residues E40 and D69. The active-site Proton acceptor is D69. Substrate-binding positions include S70, 155–158 (FGYD), K178, and 183–184 (HR).

Belongs to the HAM1 NTPase family. In terms of assembly, homodimer. Mg(2+) is required as a cofactor.

It catalyses the reaction XTP + H2O = XMP + diphosphate + H(+). It carries out the reaction dITP + H2O = dIMP + diphosphate + H(+). The enzyme catalyses ITP + H2O = IMP + diphosphate + H(+). In terms of biological role, pyrophosphatase that catalyzes the hydrolysis of nucleoside triphosphates to their monophosphate derivatives, with a high preference for the non-canonical purine nucleotides XTP (xanthosine triphosphate), dITP (deoxyinosine triphosphate) and ITP. Seems to function as a house-cleaning enzyme that removes non-canonical purine nucleotides from the nucleotide pool, thus preventing their incorporation into DNA/RNA and avoiding chromosomal lesions. This chain is dITP/XTP pyrophosphatase, found in Ralstonia nicotianae (strain ATCC BAA-1114 / GMI1000) (Ralstonia solanacearum).